Consider the following 511-residue polypeptide: Coatomer subunit delta (511 aa).

The segment covering 167-177 (QQARRDAERQG) has biased composition (basic and acidic residues). The disordered stretch occupies residues 167–188 (QQARRDAERQGKKAPGFGGFGS). At S223 the chain carries Phosphoserine. 2 positions are modified to N6-acetyllysine: K233 and K241. At S244 the chain carries Phosphoserine. The MHD domain occupies 271–511 (MESVHMKIEE…TFLVDKYEIL (241 aa)). 2 positions are modified to N6-acetyllysine: K309 and K351. Residue S493 is modified to Phosphoserine.

It belongs to the adaptor complexes medium subunit family. Delta-COP subfamily. In terms of assembly, oligomeric complex that consists of at least the alpha, beta, beta', gamma, delta, epsilon and zeta subunits.

The protein localises to the cytoplasm. It is found in the golgi apparatus membrane. Its subcellular location is the cytoplasmic vesicle. The protein resides in the COPI-coated vesicle membrane. In terms of biological role, the coatomer is a cytosolic protein complex that binds to dilysine motifs and reversibly associates with Golgi non-clathrin-coated vesicles, which further mediate biosynthetic protein transport from the ER, via the Golgi up to the trans Golgi network. Coatomer complex is required for budding from Golgi membranes, and is essential for the retrograde Golgi-to-ER transport of dilysine-tagged proteins. In mammals, the coatomer can only be recruited by membranes associated to ADP-ribosylation factors (ARFs), which are small GTP-binding proteins; the complex also influences the Golgi structural integrity, as well as the processing, activity, and endocytic recycling of LDL receptors. The sequence is that of Coatomer subunit delta (ARCN1) from Pongo abelii (Sumatran orangutan).